Here is a 110-residue protein sequence, read N- to C-terminus: U32-theraphotoxin-Cg1a (110 aa).

The first 19 residues, methionine 1–serine 19, serve as a signal peptide directing secretion. Positions leucine 20–arginine 43 are excised as a propeptide. 4 disulfides stabilise this stretch: cysteine 49/cysteine 63, cysteine 56/cysteine 69, cysteine 60/cysteine 105, and cysteine 62/cysteine 80.

This sequence belongs to the neurotoxin 03 (Tx2) family. 02 subfamily. Expressed by the venom gland.

The protein resides in the secreted. Functionally, probable ion channel inhibitor. The polypeptide is U32-theraphotoxin-Cg1a (Chilobrachys guangxiensis (Chinese earth tiger tarantula)).